We begin with the raw amino-acid sequence, 178 residues long: ATP synthase subunit delta (178 aa).

It belongs to the ATPase delta chain family. As to quaternary structure, F-type ATPases have 2 components, F(1) - the catalytic core - and F(0) - the membrane proton channel. F(1) has five subunits: alpha(3), beta(3), gamma(1), delta(1), epsilon(1). F(0) has three main subunits: a(1), b(2) and c(10-14). The alpha and beta chains form an alternating ring which encloses part of the gamma chain. F(1) is attached to F(0) by a central stalk formed by the gamma and epsilon chains, while a peripheral stalk is formed by the delta and b chains.

The protein resides in the cell inner membrane. Its function is as follows. F(1)F(0) ATP synthase produces ATP from ADP in the presence of a proton or sodium gradient. F-type ATPases consist of two structural domains, F(1) containing the extramembraneous catalytic core and F(0) containing the membrane proton channel, linked together by a central stalk and a peripheral stalk. During catalysis, ATP synthesis in the catalytic domain of F(1) is coupled via a rotary mechanism of the central stalk subunits to proton translocation. This protein is part of the stalk that links CF(0) to CF(1). It either transmits conformational changes from CF(0) to CF(1) or is implicated in proton conduction. In Laribacter hongkongensis (strain HLHK9), this protein is ATP synthase subunit delta.